A 122-amino-acid chain; its full sequence is Large ribosomal subunit protein uL14 (122 aa).

Belongs to the universal ribosomal protein uL14 family. Part of the 50S ribosomal subunit. Forms a cluster with proteins L3 and L19. In the 70S ribosome, L14 and L19 interact and together make contacts with the 16S rRNA in bridges B5 and B8.

Functionally, binds to 23S rRNA. Forms part of two intersubunit bridges in the 70S ribosome. The sequence is that of Large ribosomal subunit protein uL14 from Gluconobacter oxydans (strain 621H) (Gluconobacter suboxydans).